A 392-amino-acid polypeptide reads, in one-letter code: UPF0229 protein CPF_1540 (392 aa).

Positions 75 to 100 are disordered; that stretch reads VTTGTGEERRGDRISSDKRKAISNNK. Residues 80–94 show a composition bias toward basic and acidic residues; it reads GEERRGDRISSDKRK.

The protein belongs to the UPF0229 family.

This is UPF0229 protein CPF_1540 from Clostridium perfringens (strain ATCC 13124 / DSM 756 / JCM 1290 / NCIMB 6125 / NCTC 8237 / Type A).